We begin with the raw amino-acid sequence, 388 residues long: MRIAALLLAAGRGRRFDASSQSGENSSKQFRMLRGKPVIRRAAEALLPHVDVLLPVGDDPLLADSLEGLDILPPVSGGAERHDSVRNGLEALAKLPEPPDLVLVHDGARPCVPAEVVQNVINALKTHEGVIPAVAVIDTIKKAKDGIIVDTVPRDGLWRAQTPQGFRFGTLLELHRTHRDARTDDAALLEQAGHPVAIVEGSEDNIKLTVAEDLMRLEGVIDRNLLPRVGLGYDVHAFEEGRKLILCGIEVPHTKGLAGHSDADVGIHTLCDAIYGALAEGDIGRHFPPSDNKWKDMDSARFLVHAGERIRERGGFLVNADVTLICERPKIGPHAEAMRNRLADLLKVSVSRISVKATTSERLGFTGREEGIAATATVSIMVPDNGEA.

The interval 1 to 228 (MRIAALLLAA…GVIDRNLLPR (228 aa)) is 2-C-methyl-D-erythritol 4-phosphate cytidylyltransferase. The tract at residues 228–388 (RVGLGYDVHA…SIMVPDNGEA (161 aa)) is 2-C-methyl-D-erythritol 2,4-cyclodiphosphate synthase. 2 residues coordinate a divalent metal cation: Asp-234 and His-236. 4-CDP-2-C-methyl-D-erythritol 2-phosphate contacts are provided by residues 234–236 (DVH) and 260–261 (HS). His-268 contributes to the a divalent metal cation binding site. Residues 282–284 (DIG), 358–361 (TTSE), Phe-365, and Arg-368 each bind 4-CDP-2-C-methyl-D-erythritol 2-phosphate.

In the N-terminal section; belongs to the IspD/TarI cytidylyltransferase family. IspD subfamily. It in the C-terminal section; belongs to the IspF family. Requires a divalent metal cation as cofactor.

It catalyses the reaction 2-C-methyl-D-erythritol 4-phosphate + CTP + H(+) = 4-CDP-2-C-methyl-D-erythritol + diphosphate. It carries out the reaction 4-CDP-2-C-methyl-D-erythritol 2-phosphate = 2-C-methyl-D-erythritol 2,4-cyclic diphosphate + CMP. It functions in the pathway isoprenoid biosynthesis; isopentenyl diphosphate biosynthesis via DXP pathway; isopentenyl diphosphate from 1-deoxy-D-xylulose 5-phosphate: step 2/6. Its pathway is isoprenoid biosynthesis; isopentenyl diphosphate biosynthesis via DXP pathway; isopentenyl diphosphate from 1-deoxy-D-xylulose 5-phosphate: step 4/6. Its function is as follows. Bifunctional enzyme that catalyzes the formation of 4-diphosphocytidyl-2-C-methyl-D-erythritol from CTP and 2-C-methyl-D-erythritol 4-phosphate (MEP) (IspD), and catalyzes the conversion of 4-diphosphocytidyl-2-C-methyl-D-erythritol 2-phosphate (CDP-ME2P) to 2-C-methyl-D-erythritol 2,4-cyclodiphosphate (ME-CPP) with a corresponding release of cytidine 5-monophosphate (CMP) (IspF). The protein is Bifunctional enzyme IspD/IspF of Gluconobacter oxydans (strain 621H) (Gluconobacter suboxydans).